The chain runs to 307 residues: Cytochrome c1 1, heme protein, mitochondrial (307 aa).

Residues Met1–Ala64 constitute a mitochondrion transit peptide. Over Asp65–Met270 the chain is Mitochondrial intermembrane. Residues Ala90–Ala246 enclose the Cytochrome c domain. 4 residues coordinate heme c: Cys103, Cys106, His107, and Met226. The helical transmembrane segment at Gly271–Tyr288 threads the bilayer. The Mitochondrial matrix segment spans residues Arg289–Asn307.

This sequence belongs to the cytochrome c family. As to quaternary structure, component of the ubiquinol-cytochrome c oxidoreductase (cytochrome b-c1 complex, complex III, CIII), a multisubunit enzyme composed of 10 subunits. The complex is composed of 3 respiratory subunits cytochrome b (MT-CYB), cytochrome c1 (CYC1-1 or CYC1-2) and Rieske protein (UCR1-1 or UCR1-2), 2 core protein subunits MPPalpha1 (or MPPalpha2) and MPPB, and 5 low-molecular weight protein subunits QCR7-1 (or QCR7-2), UCRQ-1 (or UCRQ-2), QCR9, UCRY and probably QCR6-1 (or QCR6-2). The complex exists as an obligatory dimer and forms supercomplexes (SCs) in the inner mitochondrial membrane with NADH-ubiquinone oxidoreductase (complex I, CI), resulting in different assemblies (supercomplexes SCI(1)III(2) and SCI(2)III(4)). In terms of processing, binds 1 heme c group covalently per subunit.

The protein localises to the mitochondrion inner membrane. Component of the ubiquinol-cytochrome c oxidoreductase, a multisubunit transmembrane complex that is part of the mitochondrial electron transport chain which drives oxidative phosphorylation. The respiratory chain contains 3 multisubunit complexes succinate dehydrogenase (complex II, CII), ubiquinol-cytochrome c oxidoreductase (cytochrome b-c1 complex, complex III, CIII) and cytochrome c oxidase (complex IV, CIV), that cooperate to transfer electrons derived from NADH and succinate to molecular oxygen, creating an electrochemical gradient over the inner membrane that drives transmembrane transport and the ATP synthase. The cytochrome b-c1 complex catalyzes electron transfer from ubiquinol to cytochrome c, linking this redox reaction to translocation of protons across the mitochondrial inner membrane, with protons being carried across the membrane as hydrogens on the quinol. In the process called Q cycle, 2 protons are consumed from the matrix, 4 protons are released into the intermembrane space and 2 electrons are passed to cytochrome c. Cytochrome c1 is a catalytic core subunit containing a c-type heme. It transfers electrons from the [2Fe-2S] iron-sulfur cluster of the Rieske protein to cytochrome c. In Arabidopsis thaliana (Mouse-ear cress), this protein is Cytochrome c1 1, heme protein, mitochondrial (CYC1-1).